Consider the following 408-residue polypeptide: Biphenyl dioxygenase system ferredoxin--NAD(+) reductase component (408 aa).

4-35 is a binding site for FAD; that stretch reads TIAIIGAGLAGSTAARALRAQGYEGRIHLLGD. 145–173 is a binding site for NAD(+); the sequence is SLVIVGGGLIGCEVATTARKLSVHVTILE.

It belongs to the bacterial ring-hydroxylating dioxygenase ferredoxin reductase family. As to quaternary structure, this dioxygenase system consists of four proteins: the two subunits of the hydroxylase component (BphA and BphE), a ferredoxin (BphF) and a ferredoxin reductase (BphG). It depends on FAD as a cofactor.

The catalysed reaction is 2 reduced [2Fe-2S]-[ferredoxin] + NAD(+) + H(+) = 2 oxidized [2Fe-2S]-[ferredoxin] + NADH. Its pathway is xenobiotic degradation; biphenyl degradation. Its function is as follows. Part of the electron transfer component of biphenyl dioxygenase, transfers electrons from ferredoxin (BphF) to NADH. The polypeptide is Biphenyl dioxygenase system ferredoxin--NAD(+) reductase component (bphG) (Paraburkholderia xenovorans (strain LB400)).